The sequence spans 443 residues: Ribosomal protein uS12 methylthiotransferase RimO (443 aa).

Positions 10–120 (PRVGFVSLGC…VMAAVHAQCP (111 aa)) constitute an MTTase N-terminal domain. [4Fe-4S] cluster is bound by residues Cys-19, Cys-55, Cys-84, Cys-152, Cys-156, and Cys-159. The 238-residue stretch at 138-375 (LTPRHYAYLK…MALQAEISAR (238 aa)) folds into the Radical SAM core domain. Residues 378-443 (ARRVGTECTV…DEHDLYGRVL (66 aa)) enclose the TRAM domain.

This sequence belongs to the methylthiotransferase family. RimO subfamily. [4Fe-4S] cluster is required as a cofactor.

It localises to the cytoplasm. It carries out the reaction L-aspartate(89)-[ribosomal protein uS12]-hydrogen + (sulfur carrier)-SH + AH2 + 2 S-adenosyl-L-methionine = 3-methylsulfanyl-L-aspartate(89)-[ribosomal protein uS12]-hydrogen + (sulfur carrier)-H + 5'-deoxyadenosine + L-methionine + A + S-adenosyl-L-homocysteine + 2 H(+). Functionally, catalyzes the methylthiolation of an aspartic acid residue of ribosomal protein uS12. The sequence is that of Ribosomal protein uS12 methylthiotransferase RimO from Alkalilimnicola ehrlichii (strain ATCC BAA-1101 / DSM 17681 / MLHE-1).